Here is a 472-residue protein sequence, read N- to C-terminus: RING-H2 finger protein ATL13 (472 aa).

A helical membrane pass occupies residues 51–71 (ILLIIIILSIIFFISGLLHLL). The RING-type; atypical zinc-finger motif lies at 134–176 (CAVCLCEFETEDKLRLLPKCSHAFHMDCIDTWLLSHSTCPLCR). Residues 320-340 (VSTKKQSSKNRGLPGHRTAMS) are disordered.

It belongs to the RING-type zinc finger family. ATL subfamily.

Its subcellular location is the membrane. It catalyses the reaction S-ubiquitinyl-[E2 ubiquitin-conjugating enzyme]-L-cysteine + [acceptor protein]-L-lysine = [E2 ubiquitin-conjugating enzyme]-L-cysteine + N(6)-ubiquitinyl-[acceptor protein]-L-lysine.. Its pathway is protein modification; protein ubiquitination. In Arabidopsis thaliana (Mouse-ear cress), this protein is RING-H2 finger protein ATL13 (ATL13).